A 507-amino-acid polypeptide reads, in one-letter code: MIAARHYRKWWLSHIWPKDFSWLVPIESSSVPGPPECPALDEKFQSCQTVDNISLARRVGPPALLYSTGIDSSIAALVARVSCIPTGGHSSCPREYFLSAKTSLVSLVPTMDWTAAEHESGVTQNHQHRMQTEDHDSFAGEIQKLPSPPAGNTGGQNPSDPADEQGWPQRVLNEMKDMLLLLSSDGKILYASPSCKSITGYDANQLQQNALERFIHNDDKTTFAEEMNECITTTRPVHCHFRFRKKDNSSNTSCLLEAHGHPHMKTSEPNDSPENHNEDCIGVFLLCRPYPTRGSQLLDSFLEHKIENVRLNQRIAQLREEEEEDLASGQQLYAGDSTGDSGFRHNSHSGRSNSNQSSFRDTTGSGEENESSDTLTNDDPDSRSYLENAADELGQTEDMSHIEGIEMLTGLHYGDGERSQGLSTGVRQGRLIRYDMESAKLDQQARVIQDSDRKKRQKGEYMCTDCGTSDSPEWRKGPEGPKTLCNACGCKSAVQYTLFSYSSEMSS.

One can recognise a PAS domain in the interval 170–234 (RVLNEMKDML…EEMNECITTT (65 aa)). The GATA-type zinc-finger motif lies at 463 to 488 (CTDCGTSDSPEWRKGPEGPKTLCNAC).

Its function is as follows. Probable transcription factor involved in light regulation. Plays crucial roles in fungal growth and asexual development. Involved in conidiophore formation, sclerotium production, and conidial stress tolerance. Positively regulates the fungal pathogenicity towards maize and aflatoxin B1 production. This is Blue light receptor lreB from Aspergillus flavus.